A 255-amino-acid chain; its full sequence is uncharacterized protein (255 aa).

In terms of domain architecture, J spans 4 to 72 (DPYSVLGVEK…KRRKHYDKTG (69 aa)). 2 stretches are compositionally biased toward basic residues: residues 167–178 (FAPNEKKRKRRA) and 243–255 (TKPKKSKKSRSKE). Disordered stretches follow at residues 167–215 (FAPN…EEAL) and 230–255 (LISNLESKYSKSSTKPKKSKKSRSKE).

It belongs to the DnaJ family.

It localises to the nucleus. Its subcellular location is the nucleolus. This is an uncharacterized protein from Schizosaccharomyces pombe (strain 972 / ATCC 24843) (Fission yeast).